A 373-amino-acid polypeptide reads, in one-letter code: RNA cytidine acetyltransferase (373 aa).

Residue arginine 53 coordinates ATP. Residues 216–218 and 223–229 each bind acetyl-CoA; these read IAT and TGMGYGS. The disordered stretch occupies residues 246–271; sequence GEFEEENEAAKPADEESDDESNLLKE. Arginine 313 serves as a coordination point for acetyl-CoA.

Belongs to the RNA cytidine acetyltransferase family. NAT10 subfamily.

It localises to the nucleus. It is found in the nucleolus. It carries out the reaction a cytidine in 18S rRNA + acetyl-CoA + ATP + H2O = an N(4)-acetylcytidine in 18S rRNA + ADP + phosphate + CoA + H(+). The enzyme catalyses a cytidine in tRNA + acetyl-CoA + ATP + H2O = an N(4)-acetylcytidine in tRNA + ADP + phosphate + CoA + H(+). Its function is as follows. RNA cytidine acetyltransferase with specificity toward both 18S rRNA and tRNAs. Catalyzes the formation of N(4)-acetylcytidine (ac4C) in 18S rRNA. Required for early nucleolar cleavages of precursor rRNA at sites A0, A1 and A2 during 18S rRNA synthesis. Catalyzes the formation of ac4C in serine and leucine tRNAs. Requires a tRNA-binding adapter protein for full tRNA acetyltransferase activity but not for 18S rRNA acetylation. This chain is RNA cytidine acetyltransferase, found in Achlya ambisexualis (Water mold).